The sequence spans 648 residues: cAMP-dependent protein kinase catalytic subunit (648 aa).

4 stretches are compositionally biased toward low complexity: residues 1–20 (MSNS…TINN), 46–67 (SGNN…NSSG), 136–175 (QQQP…PQQQ), and 232–254 (NTPS…NPHT). Disordered regions lie at residues 1–25 (MSNS…KVNV), 40–86 (GGGG…TKMD), 121–175 (KVPS…PQQQ), and 219–290 (QQQQ…DTNP). Over residues 255–290 (SGLSLQHAHSSYTPSNVLHSPTHFQSSLPTRLDTNP) the composition is skewed to polar residues. In terms of domain architecture, Protein kinase spans 336–590 (FKQIRVIGTG…ALDVKNHRWF (255 aa)). ATP contacts are provided by residues 342–350 (IGTGTFGKV) and Lys-365. The active-site Proton acceptor is the Asp-459. Thr-490 bears the Phosphothreonine mark. The AGC-kinase C-terminal domain maps to 591–648 (SDINWERLYQRRDNGPFIPKIQHQGDSSNFEMYDEEEMVEEPPSSNYVDPYAHLFKDF).

The protein belongs to the protein kinase superfamily. AGC Ser/Thr protein kinase family. cAMP subfamily. In Dictyostelium the holoenzyme is a dimer composed of a regulatory (R) and a catalytic (C) subunit. In the presence of cAMP it dissociates into the active C subunit and an R monomer.

It catalyses the reaction L-seryl-[protein] + ATP = O-phospho-L-seryl-[protein] + ADP + H(+). The enzyme catalyses L-threonyl-[protein] + ATP = O-phospho-L-threonyl-[protein] + ADP + H(+). Its function is as follows. Essential for differentiation and fruit morphogenesis. The protein is cAMP-dependent protein kinase catalytic subunit (pkaC) of Dictyostelium discoideum (Social amoeba).